The chain runs to 360 residues: Inward rectifier potassium channel 13 (360 aa).

Residues methionine 1–aspartate 50 are Cytoplasmic-facing. A helical transmembrane segment spans residues methionine 51 to alanine 77. At valine 78 to serine 105 the chain is on the extracellular side. The helical; Pore-forming intramembrane region spans phenylalanine 106–tyrosine 122. The Selectivity filter signature appears at threonine 119–threonine 124. The Extracellular portion of the chain corresponds to glycine 123–cysteine 131. A helical membrane pass occupies residues proline 132–valine 157. The Cytoplasmic portion of the chain corresponds to alanine 158–glutamate 360. At serine 287 the chain carries Phosphoserine; by PKA.

It belongs to the inward rectifier-type potassium channel (TC 1.A.2.1) family. KCNJ13 subfamily. In terms of assembly, homotetramer. Interacts with RAB28; the interaction may facilitate cone outer segments phagocytosis. In terms of processing, phosphorylation at Ser-287 by PKA increases ionic currents. In terms of tissue distribution, expressed in retina.

Its subcellular location is the membrane. The protein resides in the cell membrane. The catalysed reaction is K(+)(in) = K(+)(out). Inhibited by Ba(2+) and Cs(+), although sensitivity to those inhibitors is much lower than in other Kir channels. Inward rectifier potassium channels are characterized by a greater tendency to allow potassium to flow into the cell rather than out of it. Their voltage dependence is regulated by the concentration of extracellular potassium; as external potassium is raised, the voltage range of the channel opening shifts to more positive voltages. The inward rectification is mainly due to the blockage of outward current by internal magnesium. KCNJ13 has a very low single channel conductance, low sensitivity to block by external barium and cesium, and no dependence of its inward rectification properties on the internal blocking particle magnesium. The protein is Inward rectifier potassium channel 13 of Mus musculus (Mouse).